Reading from the N-terminus, the 445-residue chain is Oxysterols receptor LXR-alpha (445 aa).

2 disordered regions span residues 1-34 (MSLW…QGGN) and 63-86 (ALLP…KKGP). The interval 1-94 (MSLWLEASMP…GPAPKMLGNE (94 aa)) is transactivation AF-1; required for ligand-independent transactivation function. The nuclear receptor DNA-binding region spans 93 to 168 (NELCSVCGDK…AGMREECVLS (76 aa)). NR C4-type zinc fingers lie at residues 96–116 (CSVC…CEGC) and 132–156 (CHSG…LRKC). Residue S191 is modified to Phosphoserine. The transactivation AF-2; required for ligand-dependent transactivation function; mediates interaction with CCAR2 stretch occupies residues 203 to 445 (QLSPEQLGMI…LLSEIWDVHE (243 aa)). An NR LBD domain is found at 207–445 (EQLGMIEKLV…LLSEIWDVHE (239 aa)).

It belongs to the nuclear hormone receptor family. NR1 subfamily. Heterodimer of NR1H3 and RXR (retinoic acid receptor). Interacts with CCAR2 (via N-terminus) in a ligand-independent manner. Interacts with SIRT1 and this interaction is inhibited by CCAR2. Ubiquitinated. Ubiquitination by UBR5 leads to its degradation: UBR5 specifically recognizes and binds ligand-bound NR1H3 when it is not associated with coactivators (NCOAs). In presence of NCOAs, the UBR5-degron is not accessible, preventing its ubiquitination and degradation.

The protein localises to the nucleus. It is found in the cytoplasm. Nuclear receptor that exhibits a ligand-dependent transcriptional activation activity. Interaction with retinoic acid receptor (RXR) shifts RXR from its role as a silent DNA-binding partner to an active ligand-binding subunit in mediating retinoid responses through target genes defined by LXRES. LXRES are DR4-type response elements characterized by direct repeats of two similar hexanuclotide half-sites spaced by four nucleotides. Plays an important role in the regulation of cholesterol homeostasis, regulating cholesterol uptake through MYLIP-dependent ubiquitination of LDLR, VLDLR and LRP8. Interplays functionally with RORA for the regulation of genes involved in liver metabolism. Induces LPCAT3-dependent phospholipid remodeling in endoplasmic reticulum (ER) membranes of hepatocytes, driving SREBF1 processing and lipogenesis. Via LPCAT3, triggers the incorporation of arachidonate into phosphatidylcholines of ER membranes, increasing membrane dynamics and enabling triacylglycerols transfer to nascent very low-density lipoprotein (VLDL) particles. Via LPCAT3 also counteracts lipid-induced ER stress response and inflammation, likely by modulating SRC kinase membrane compartmentalization and limiting the synthesis of lipid inflammatory mediators. The polypeptide is Oxysterols receptor LXR-alpha (Nr1h3) (Mus musculus (Mouse)).